Consider the following 83-residue polypeptide: Cytochrome b559 subunit alpha (83 aa).

The chain crosses the membrane as a helical span at residues 21–35; it reads VIHSITIPSLFIAGW. Histidine 23 provides a ligand contact to heme.

This sequence belongs to the PsbE/PsbF family. Heterodimer of an alpha subunit and a beta subunit. PSII is composed of 1 copy each of membrane proteins PsbA, PsbB, PsbC, PsbD, PsbE, PsbF, PsbH, PsbI, PsbJ, PsbK, PsbL, PsbM, PsbT, PsbX, PsbY, PsbZ, Psb30/Ycf12, at least 3 peripheral proteins of the oxygen-evolving complex and a large number of cofactors. It forms dimeric complexes. The cofactor is heme b.

It localises to the plastid. The protein resides in the chloroplast thylakoid membrane. This b-type cytochrome is tightly associated with the reaction center of photosystem II (PSII). PSII is a light-driven water:plastoquinone oxidoreductase that uses light energy to abstract electrons from H(2)O, generating O(2) and a proton gradient subsequently used for ATP formation. It consists of a core antenna complex that captures photons, and an electron transfer chain that converts photonic excitation into a charge separation. This chain is Cytochrome b559 subunit alpha, found in Daucus carota (Wild carrot).